The chain runs to 89 residues: Large ribosomal subunit protein bL27 (89 aa).

This sequence belongs to the bacterial ribosomal protein bL27 family.

The chain is Large ribosomal subunit protein bL27 from Afipia carboxidovorans (strain ATCC 49405 / DSM 1227 / KCTC 32145 / OM5) (Oligotropha carboxidovorans).